Consider the following 426-residue polypeptide: Glutamate-1-semialdehyde 2,1-aminomutase (426 aa).

The residue at position 265 (K265) is an N6-(pyridoxal phosphate)lysine.

It belongs to the class-III pyridoxal-phosphate-dependent aminotransferase family. HemL subfamily. Homodimer. It depends on pyridoxal 5'-phosphate as a cofactor.

It is found in the cytoplasm. The enzyme catalyses (S)-4-amino-5-oxopentanoate = 5-aminolevulinate. It participates in porphyrin-containing compound metabolism; protoporphyrin-IX biosynthesis; 5-aminolevulinate from L-glutamyl-tRNA(Glu): step 2/2. This is Glutamate-1-semialdehyde 2,1-aminomutase from Escherichia coli O127:H6 (strain E2348/69 / EPEC).